A 510-amino-acid chain; its full sequence is Rab proteins geranylgeranyltransferase component A 1 (510 aa).

It belongs to the Rab GDI family. As to quaternary structure, may interact with rab-5, rab-7 and rab-11. Does not interact with rab-3, rab-27 and rab-10. Expressed in several neurons including head neurons, motor neurons located in the ventral nerve cord, HSN and CAN neurons, and tail neurons, and in muscles such as body-wall, pharyngeal, intestinal and anal sphincter. Also expressed in seam cells, the hypodermis and the intestine.

It localises to the cytoplasm. Its function is as follows. Substrate-binding subunit of the Rab geranylgeranyltransferase (GGTase) complex. Binds unprenylated Rab proteins and presents the substrate peptide to the catalytic component B and remains bound to it after the geranylgeranyl transfer reaction. The component A is thought to be regenerated by transferring its prenylated Rab back to the donor membrane. Plays a role in neurotransmitter release from presynaptic terminals at neuromuscular junctions. Positively regulates the function of rab-27 in synaptic transmission most likely through mediating rab-27 prenylation. In Caenorhabditis elegans, this protein is Rab proteins geranylgeranyltransferase component A 1.